A 211-amino-acid chain; its full sequence is Small ribosomal subunit protein uS5 (211 aa).

The 64-residue stretch at 58-121 folds into the S5 DRBM domain; sequence FEERIVKLKR…KKAHNSIHTV (64 aa).

Belongs to the universal ribosomal protein uS5 family. Part of the 30S ribosomal subunit. Contacts proteins S4 and S8.

Its function is as follows. With S4 and S12 plays an important role in translational accuracy. Located at the back of the 30S subunit body where it stabilizes the conformation of the head with respect to the body. The sequence is that of Small ribosomal subunit protein uS5 from Mycoplasma genitalium (strain ATCC 33530 / DSM 19775 / NCTC 10195 / G37) (Mycoplasmoides genitalium).